A 223-amino-acid chain; its full sequence is 3,4-dihydroxy-2-butanone 4-phosphate synthase (223 aa).

Residues 47–48 (RE), Asp52, 160–164 (RRGHT), and Glu184 contribute to the D-ribulose 5-phosphate site. Glu48 contributes to the Mg(2+) binding site. Residue His163 coordinates Mg(2+).

It belongs to the DHBP synthase family. In terms of assembly, homodimer. The cofactor is Mg(2+). Mn(2+) serves as cofactor.

It carries out the reaction D-ribulose 5-phosphate = (2S)-2-hydroxy-3-oxobutyl phosphate + formate + H(+). It functions in the pathway cofactor biosynthesis; riboflavin biosynthesis; 2-hydroxy-3-oxobutyl phosphate from D-ribulose 5-phosphate: step 1/1. Catalyzes the conversion of D-ribulose 5-phosphate to formate and 3,4-dihydroxy-2-butanone 4-phosphate. This is 3,4-dihydroxy-2-butanone 4-phosphate synthase from Cupriavidus pinatubonensis (strain JMP 134 / LMG 1197) (Cupriavidus necator (strain JMP 134)).